We begin with the raw amino-acid sequence, 326 residues long: Tagatose 1,6-diphosphate aldolase 2 (326 aa).

The protein belongs to the aldolase LacD family.

The enzyme catalyses D-tagatofuranose 1,6-bisphosphate = D-glyceraldehyde 3-phosphate + dihydroxyacetone phosphate. It participates in carbohydrate metabolism; D-tagatose 6-phosphate degradation; D-glyceraldehyde 3-phosphate and glycerone phosphate from D-tagatose 6-phosphate: step 2/2. This Streptococcus agalactiae serotype III (strain NEM316) protein is Tagatose 1,6-diphosphate aldolase 2 (lacD2).